The chain runs to 360 residues: BOLA class I histocompatibility antigen, alpha chain BL3-6 (360 aa).

The signal sequence occupies residues 1–21; sequence MGPRALLLLLSGVLILTETRA. The alpha-1 stretch occupies residues 22–111; the sequence is GSHSLRYFST…LRGYYNQSEA (90 aa). Over 22 to 308 the chain is Extracellular; that stretch reads GSHSLRYFST…QPSFLTMGII (287 aa). An N-linked (GlcNAc...) asparagine glycan is attached at asparagine 107. The interval 112–203 is alpha-2; that stretch reads GSHTLQWMSG…ENGKDTLLRA (92 aa). Disulfide bonds link cysteine 122–cysteine 185 and cysteine 224–cysteine 280. Positions 204–295 are alpha-3; sequence DPPKAHVTHH…GLQEPLTLRW (92 aa). The 87-residue stretch at 206-292 folds into the Ig-like C1-type domain; sequence PKAHVTHHPI…QHEGLQEPLT (87 aa). A connecting peptide region spans residues 296–308; sequence EPPQPSFLTMGII. Residues 309-328 form a helical membrane-spanning segment; it reads VGLVLLVVTGAVVAGVVICM. Topologically, residues 329-360 are cytoplasmic; the sequence is KKRSGEKGGNYIQASSSDSAQGSDVSLTVPKV. Positions 340-360 are disordered; that stretch reads IQASSSDSAQGSDVSLTVPKV. Positions 341–354 are enriched in low complexity; sequence QASSSDSAQGSDVS. Serine 351 and serine 354 each carry phosphoserine.

The protein belongs to the MHC class I family. As to quaternary structure, heterodimer of an alpha chain and a beta chain (beta-2-microglobulin).

The protein resides in the membrane. In terms of biological role, involved in the presentation of foreign antigens to the immune system. The protein is BOLA class I histocompatibility antigen, alpha chain BL3-6 of Bos taurus (Bovine).